Here is a 278-residue protein sequence, read N- to C-terminus: Small ribosomal subunit protein uS2 (278 aa).

2 disordered regions span residues 216-235 (EAAA…TQWD) and 250-278 (NFAA…EWTN). Residues 256–278 (ADGNWGATTGGDWAAAGGEEWTN) show a composition bias toward low complexity.

This sequence belongs to the universal ribosomal protein uS2 family. In terms of assembly, component of the small ribosomal subunit. Mature ribosomes consist of a small (40S) and a large (60S) subunit. The 40S subunit contains about 33 different proteins and 1 molecule of RNA (18S). The 60S subunit contains about 49 different proteins and 3 molecules of RNA (25S, 5.8S and 5S). Interacts with ribosomal protein S21.

It localises to the cytoplasm. In terms of biological role, required for the assembly and/or stability of the 40S ribosomal subunit. Required for the processing of the 20S rRNA-precursor to mature 18S rRNA in a late step of the maturation of 40S ribosomal subunits. The sequence is that of Small ribosomal subunit protein uS2 from Monosiga brevicollis (Choanoflagellate).